We begin with the raw amino-acid sequence, 173 residues long: Disulfide bond formation protein B (173 aa).

Residues 1 to 14 lie on the Cytoplasmic side of the membrane; sequence MIEFLRRIAAHRLA. The helical transmembrane segment at 15 to 31 threads the bilayer; it reads WSLLAASALFLELSALF. Over 32 to 49 the chain is Periplasmic; sequence FQHVLGLHPCVMCVYERI. Cysteine 41 and cysteine 44 are joined by a disulfide. Residues 50–65 form a helical membrane-spanning segment; that stretch reads ATLGVLTAGLLGMVAP. The Cytoplasmic segment spans residues 66-72; the sequence is QKWYVRW. A helical transmembrane segment spans residues 73–90; sequence SALLLWGSSAFWGLKLAL. Residues 91 to 145 lie on the Periplasmic side of the membrane; it reads KHVDYQVNPSPFNVCEGFVDFPSWAPLDQWIPWMFYPDGDCSEVTWQFLSFSMPQ. A disulfide bridge links cysteine 105 with cysteine 131. A helical transmembrane segment spans residues 146 to 164; that stretch reads WLVAIFAVYLLVFVVVAIG. The Cytoplasmic segment spans residues 165-173; sequence NLVKGRCCS.

It belongs to the DsbB family.

It is found in the cell inner membrane. In terms of biological role, required for disulfide bond formation in some periplasmic proteins. Acts by oxidizing the DsbA protein. This chain is Disulfide bond formation protein B, found in Aeromonas hydrophila subsp. hydrophila (strain ATCC 7966 / DSM 30187 / BCRC 13018 / CCUG 14551 / JCM 1027 / KCTC 2358 / NCIMB 9240 / NCTC 8049).